Reading from the N-terminus, the 438-residue chain is Aspartyl protease 25 (438 aa).

Residues 1-23 (MAATTTIPLLLLLLAATVAAAAA) form the signal peptide. The Peptidase A1 domain occupies 79-433 (YVVRAGLGSP…DVANSRVGFA (355 aa)). Residue Asp97 is part of the active site. Cysteines 107 and 113 form a disulfide. 3 N-linked (GlcNAc...) asparagine glycosylation sites follow: Asn123, Asn193, and Asn282. Residue Asp313 is part of the active site. Cysteines 352 and 394 form a disulfide.

This sequence belongs to the peptidase A1 family.

Its function is as follows. Anther-specific aspartic protease involved in tapetal programmed cell death (PCD). Directly regulated by the transcription factor EAT1/DTD in anthers during tapetum PCD and degeneration. This chain is Aspartyl protease 25, found in Oryza sativa subsp. japonica (Rice).